The sequence spans 199 residues: 7-methyl-GTP pyrophosphatase (199 aa).

The Proton acceptor role is filled by Asp74.

Belongs to the Maf family. YceF subfamily. The cofactor is a divalent metal cation.

The protein localises to the cytoplasm. It carries out the reaction N(7)-methyl-GTP + H2O = N(7)-methyl-GMP + diphosphate + H(+). Its function is as follows. Nucleoside triphosphate pyrophosphatase that hydrolyzes 7-methyl-GTP (m(7)GTP). May have a dual role in cell division arrest and in preventing the incorporation of modified nucleotides into cellular nucleic acids. The protein is 7-methyl-GTP pyrophosphatase of Cupriavidus pinatubonensis (strain JMP 134 / LMG 1197) (Cupriavidus necator (strain JMP 134)).